Reading from the N-terminus, the 177-residue chain is Insertion element IS1223 uncharacterized 20.7 kDa protein (177 aa).

The interval K112–L131 is disordered. A compositionally biased stretch (basic residues) spans Q113 to T128.

It belongs to the IS150/IS1296 orfA family.

This is Insertion element IS1223 uncharacterized 20.7 kDa protein from Lactobacillus johnsonii.